A 717-amino-acid polypeptide reads, in one-letter code: Protein E2 homolog (717 aa).

This sequence belongs to the poxviridae E2 protein family.

This is Protein E2 homolog from Fowlpox virus (strain NVSL) (FPV).